Reading from the N-terminus, the 100-residue chain is Transcription and mRNA export factor SUS1 (100 aa).

It belongs to the ENY2 family. In terms of assembly, component of the nuclear pore complex (NPC)-associated TREX-2 complex (transcription and export complex 2), composed of at least SUS1, SAC3, THP1, SEM1, and CDC31. TREX-2 contains 2 SUS1 chains. The TREX-2 complex interacts with the nucleoporin NUP1. Component of the 1.8 MDa SAGA transcription coactivator-HAT complex. SAGA is built of 5 distinct domains with specialized functions. Within the SAGA complex, SUS1, SGF11, SGF73 and UBP8 form an additional subcomplex of SAGA called the DUB module (deubiquitination module). Interacts directly with THP1, SAC3, SGF11, and with the RNA polymerase II.

It is found in the nucleus. The protein resides in the nucleoplasm. It localises to the cytoplasm. The protein localises to the P-body. Its function is as follows. Involved in mRNA export coupled transcription activation by association with both the TREX-2 and the SAGA complexes. At the promoters, SAGA is required for recruitment of the basal transcription machinery. It influences RNA polymerase II transcriptional activity through different activities such as TBP interaction and promoter selectivity, interaction with transcription activators, and chromatin modification through histone acetylation and deubiquitination. Within the SAGA complex, participates in a subcomplex required for deubiquitination of H2B and for the maintenance of steady-state H3 methylation levels. The TREX-2 complex functions in docking export-competent ribonucleoprotein particles (mRNPs) to the nuclear entrance of the nuclear pore complex (nuclear basket). TREX-2 participates in mRNA export and accurate chromatin positioning in the nucleus by tethering genes to the nuclear periphery. May also be involved in cytoplasmic mRNA decay by interaction with components of P-bodies. This Cryptococcus neoformans var. neoformans serotype D (strain B-3501A) (Filobasidiella neoformans) protein is Transcription and mRNA export factor SUS1.